The sequence spans 216 residues: Protein Syd (216 aa).

Belongs to the Syd family.

It localises to the cell inner membrane. Functionally, interacts with the SecY protein in vivo. May bind preferentially to an uncomplexed state of SecY, thus functioning either as a chelating agent for excess SecY in the cell or as a regulatory factor that negatively controls the translocase function. This is Protein Syd from Shewanella baltica (strain OS223).